Reading from the N-terminus, the 188-residue chain is Crossover junction endodeoxyribonuclease RuvC (188 aa).

Catalysis depends on residues D7, E68, and D141. D7, E68, and D141 together coordinate Mg(2+).

This sequence belongs to the RuvC family. As to quaternary structure, homodimer which binds Holliday junction (HJ) DNA. The HJ becomes 2-fold symmetrical on binding to RuvC with unstacked arms; it has a different conformation from HJ DNA in complex with RuvA. In the full resolvosome a probable DNA-RuvA(4)-RuvB(12)-RuvC(2) complex forms which resolves the HJ. Mg(2+) is required as a cofactor.

It localises to the cytoplasm. The catalysed reaction is Endonucleolytic cleavage at a junction such as a reciprocal single-stranded crossover between two homologous DNA duplexes (Holliday junction).. In terms of biological role, the RuvA-RuvB-RuvC complex processes Holliday junction (HJ) DNA during genetic recombination and DNA repair. Endonuclease that resolves HJ intermediates. Cleaves cruciform DNA by making single-stranded nicks across the HJ at symmetrical positions within the homologous arms, yielding a 5'-phosphate and a 3'-hydroxyl group; requires a central core of homology in the junction. The consensus cleavage sequence is 5'-(A/T)TT(C/G)-3'. Cleavage occurs on the 3'-side of the TT dinucleotide at the point of strand exchange. HJ branch migration catalyzed by RuvA-RuvB allows RuvC to scan DNA until it finds its consensus sequence, where it cleaves and resolves the cruciform DNA. The chain is Crossover junction endodeoxyribonuclease RuvC from Mycobacterium avium (strain 104).